Reading from the N-terminus, the 165-residue chain is Small ribosomal subunit protein uS5 (165 aa).

The region spanning 10–73 (LVEKLVAVDR…EAARRNMITV (64 aa)) is the S5 DRBM domain.

It belongs to the universal ribosomal protein uS5 family. As to quaternary structure, part of the 30S ribosomal subunit. Contacts proteins S4 and S8.

Its function is as follows. With S4 and S12 plays an important role in translational accuracy. Functionally, located at the back of the 30S subunit body where it stabilizes the conformation of the head with respect to the body. In Acinetobacter baumannii (strain AB307-0294), this protein is Small ribosomal subunit protein uS5.